The primary structure comprises 1141 residues: MGRLYLIVLGVLITATAGFPRSVHELKIECPHTVVLGQGYVTGSVELGFIALDQVTDLKIESSCSFDHHAAPTTTQNFTQLKWAKTASTTDTTNAAETTFESKSTEVHLKGVCTIPSNVLDGPSRPVTGRKTVVCYDLACNQTHCQPTVHLLAPIQTCMSVRSCMISLLASRIQVVYEKTYCVTGQLIEGLCFNPVPNLALTQPGHTYDTFTLPITCFLVAKKGANLKIAVELEKLTTKTGCAENALQAYYICFIGQHSEPLTVPMLEDYRSAEIFTRIMMNPKGEDHDMEQSSQGALRIVGPIKGKVPPTETSDTVQGIAFAGLPMYSSFSSLVRKAEPEYLFSPGIIAESNHSSCDKKTLPLTWRGFLSMSGEIERITGCNVFCTLAGPGASCEAYSENGIFNISSPTCLVNKVQKFRGSEQRINFISQRIDQDVIVYCNGQKKVILTKTLVIGQCIYTFTSIFSLIPSVAHSLAVELCVPGIHGWATIALVITFCFGWLLIPTTTMVVLKCLRLLTYSCSHYSTESKFKVILEKVKVEYQKTMGSMVCDICHHECETAKELESHKKSCADGQCPYCMTITEATESALQAHYAVCKLTGRFHEALKKSLKKPEVQRGCYRTLGVFRYKSRCYVGLVWMCLLTLELIVWAASADTPLLEPGWSDTAHGVGDIPMKTDLELDFAIPSSSSYSYRRRLVNPANSDETVPFHFQLERQVIHAEIQSLGHWMDATFNIISAFHCYGECKKYSYPWQTAKCFFEKDYQYETSWSCNPPDCPGVGTGCTACGIYLDKLKSVGKAYKVITLKYARKVCIQLGTEQTCKNIDVNDCLVTSSIKVCMIGTISKFQPGDTLLFLGPLEEGGLVLKQWCTTTCSFGDPGDIMSTTSGMRCPEHTGSFRKICGFATTPVCEYQGNTVSGFKRLMATKDSFQSFNVSEVHITTTKLEWSDPDSNIKDHINLILNRDVSFQDLSDNPCKVDLSTQAIDGAWGSGVGFTLTCIVGLTECSSFMTSIKVCDMAMCYGASVVNLVRGSNTVKIVGKGGHSGSTFRCCHDKDCTSNGLLASAPHLERVTGFNQIDSDKVYDDGAPPCSIKCWFAKSGEWLLGILNGNWVVVAVLVIILLISIFLFSFFCPIRSHKKQL.

Positions 1 to 18 (MGRLYLIVLGVLITATAG) are cleaved as a signal peptide. The Lumenal portion of the chain corresponds to 19 to 483 (FPRSVHELKI…HSLAVELCVP (465 aa)). Intrachain disulfides connect Cys30–Cys158, Cys64–Cys164, Cys113–Cys135, Cys140–Cys145, Cys182–Cys192, Cys217–Cys253, Cys242–Cys357, Cys382–Cys441, Cys386–Cys395, and Cys458–Cys481. N-linked (GlcNAc...) asparagine; by host glycosylation occurs at Asn141. The N-linked (GlcNAc...) asparagine; by host glycan is linked to Asn353. The N-linked (GlcNAc...) asparagine; by host glycan is linked to Asn405. The helical transmembrane segment at 484–506 (GIHGWATIALVITFCFGWLLIPT) threads the bilayer. At 507–633 (TTMVVLKCLR…LGVFRYKSRC (127 aa)) the chain is on the cytoplasmic side. The binding to the ribonucleoprotein stretch occupies residues 522–539 (CSHYSTESKFKVILEKVK). CCHC-type zinc fingers lie at residues 551–571 (CDIC…KKSC) and 576–597 (CPYC…YAVC). Binding to the ribonucleoprotein stretches follow at residues 594–611 (YAVC…KKSL), 598–609 (KLTGRFHEALKK), and 617–631 (QRGC…RYKS). Residues 617–640 (QRGCYRTLGVFRYKSRCYVGLVWM) form the ITAM domain. Tyr621 and Tyr634 each carry phosphotyrosine. The YxxL signature appears at 621–624 (YRTL). The chain crosses the membrane as a helical span at residues 634-654 (YVGLVWMCLLTLELIVWAASA). The Lumenal segment spans residues 655-1110 (DTPLLEPGWS…EWLLGILNGN (456 aa)). Cystine bridges form between Cys741–Cys776, Cys745–Cys783, Cys757–Cys890, Cys771–Cys901, Cys786–Cys909, Cys812–Cys821, Cys829–Cys838, and Cys869–Cys873. The interval 763 to 783 (YQYETSWSCNPPDCPGVGTGC) is fusion loop. Asn933 carries an N-linked (GlcNAc...) asparagine; by host glycan. 5 cysteine pairs are disulfide-bonded: Cys975–Cys1005, Cys998–Cys1050, Cys1015–Cys1020, Cys1051–Cys1056, and Cys1090–Cys1094. The helical transmembrane segment at 1111-1131 (WVVVAVLVIILLISIFLFSFF) threads the bilayer. The tract at residues 1127-1141 (LFSFFCPIRSHKKQL) is binding to the ribonucleoprotein. The Cytoplasmic portion of the chain corresponds to 1132–1141 (CPIRSHKKQL).

This sequence belongs to the hantavirus envelope glycoprotein family. In terms of assembly, homodimer. Homotetramer; forms heterotetrameric Gn-Gc spikes in the pre-fusion conformation. Interacts (via C-terminus) with the nucleoprotein. Interacts with host TUFM; this interaction contributes to the virus-induced degradation of mitochondria by autophagy, which leads to degradation of host MAVS and inhibition of type I interferon (IFN) responses. Interacts with host MAP1LC3B; this interaction contributes to the virus-induced degradation of mitochondria by autophagy, which leads to degradation of host MAVS and inhibition of type I interferon (IFN) responses. Homodimer. Homotetramer; forms heterotetrameric Gn-Gc spikes in the pre-fusion conformation. Homotrimer; forms homotrimer in the post-fusion conformation at acidic pH. Interacts (via C-terminus) with the nucleoprotein. In terms of processing, envelope polyprotein precursor is quickly cleaved in vivo just after synthesis, presumably by host signal peptidase.

The protein resides in the virion membrane. It is found in the host cell surface. It localises to the host Golgi apparatus membrane. The protein localises to the host endoplasmic reticulum membrane. Its subcellular location is the host mitochondrion. In terms of biological role, forms homotetramers with glycoprotein C at the surface of the virion. Attaches the virion to host cell receptors including integrin ITGAV/ITGB3. This attachment induces virion internalization predominantly through clathrin-dependent endocytosis. Mediates the assembly and budding of infectious virus particles through its interaction with the nucleocapsid protein and the viral genome. May dysregulate normal immune and endothelial cell responses through an ITAM motif. Translocates to mitochondria, binds to host TUFM and recruits MAP1LC3B. These interactions induce mitochondrial autophagy and therefore destruction of host MAVS leading to inhibition of type I interferon (IFN) responses. Concomitant breakdown of glycoprotein N is apparently prevented by the nucleoprotein that may inhibit Gn-stimulated autophagosome-lysosome fusion. Interacts with the viral genomic RNA. Forms homotetramers with glycoprotein N at the surface of the virion. Attaches the virion to host cell receptors including integrin ITGAV/ITGB3. This attachment induces virion internalization predominantly through clathrin-dependent endocytosis. Class II fusion protein that promotes fusion of viral membrane with host endosomal membrane after endocytosis of the virion. The sequence is that of Envelopment polyprotein (GP) from Homo sapiens (Human).